A 118-amino-acid polypeptide reads, in one-letter code: Large ribosomal subunit protein bL21c (118 aa).

The protein belongs to the bacterial ribosomal protein bL21 family. Part of the 50S ribosomal subunit.

It localises to the plastid. The protein localises to the chloroplast. Functionally, this protein binds to 23S rRNA. This is Large ribosomal subunit protein bL21c from Zygnema circumcarinatum (Green alga).